Consider the following 699-residue polypeptide: Elongation factor G (699 aa).

The region spanning 8–288 is the tr-type G domain; sequence EDYRNFGIMA…AVVDYLPSPI (281 aa). GTP contacts are provided by residues 17-24, 86-90, and 140-143; these read AHIDAGKT, DTPGH, and NKMD.

This sequence belongs to the TRAFAC class translation factor GTPase superfamily. Classic translation factor GTPase family. EF-G/EF-2 subfamily.

It localises to the cytoplasm. Functionally, catalyzes the GTP-dependent ribosomal translocation step during translation elongation. During this step, the ribosome changes from the pre-translocational (PRE) to the post-translocational (POST) state as the newly formed A-site-bound peptidyl-tRNA and P-site-bound deacylated tRNA move to the P and E sites, respectively. Catalyzes the coordinated movement of the two tRNA molecules, the mRNA and conformational changes in the ribosome. In Sinorhizobium fredii (strain NBRC 101917 / NGR234), this protein is Elongation factor G.